The following is a 99-amino-acid chain: Nucleoid-associated protein SSU98_0195 (99 aa).

This sequence belongs to the YbaB/EbfC family. As to quaternary structure, homodimer.

The protein resides in the cytoplasm. It is found in the nucleoid. Binds to DNA and alters its conformation. May be involved in regulation of gene expression, nucleoid organization and DNA protection. The polypeptide is Nucleoid-associated protein SSU98_0195 (Streptococcus suis (strain 98HAH33)).